The chain runs to 342 residues: Global transcription regulator FGP1 (342 aa).

The interval 91-113 (FSPGEKKRASKKPKKQAGVAKAY) is disordered.

The protein belongs to the MIT1/WOR1 family.

It is found in the nucleus. In terms of biological role, global transcriptional regulator of pathogenicity. Regulates many genes during growth in putrescine medium and during infection. Involved in the developmental processes of conidium formation and sexual reproduction and modulates a morphological change that accompanies mycotoxin production. In Gibberella zeae (strain ATCC MYA-4620 / CBS 123657 / FGSC 9075 / NRRL 31084 / PH-1) (Wheat head blight fungus), this protein is Global transcription regulator FGP1.